A 701-amino-acid polypeptide reads, in one-letter code: MADLLFEIGAEEIPAGFVPGALRQLEDDLAKALADARLAHGEVRAVGTPRRLAVWARDVAPKQTDARTEAFGPPVAQAYDAEGKPTPAATGFARSQGVEVSALVRAQTPKGERVAVTKVEKGRKAEQVLPALLERLVAGLRFRKAMRSRFDEVTFARPVRWMVALLGGRPLKVRHGEVASGKVTYGHRFLAPKAIALKGTPDDYLAKLRRAHVLADPEERRAALLAELARAGKEAGGKVRDDPALVEQVLYLVEEPSAVVGEFERSNLELPPEVVISEMRNHQRYFAVVDGKGRLKNRFVAVSATRVKDPAVARHGYERVLRARLADARFFFEEDRKRKLHERIEDLGRRTFQAKLGSELDRAQRIGAVASGLARALGKDALVADLLEASRLAKVDLNTGMVGEFPELQGTMGAHYARLEGLKPEIADAIEDHYKPIGAAEEMPRSDLGALVAVADRLHSLVGIIGVGEKATGAADPFGLRRAAIGILRIVIARGYHLSLATAVEQTLDALAGVKLAAGRALVAEQVLDFLRGRVRAAWTERFDADLVEAVLAAGSDDVVDARRRLEALAEAKARPDFGSLAVAFKRVANIQEKAGGPGAAAVDPALLRDPAEQDLLAALEKVEQEVGARRAARDYPAVLRTVATLEPAVARFFDDVLVMAEDPALRANRLGLMRRVGALFSDLADFRKIQAEAPAQARAG.

It belongs to the class-II aminoacyl-tRNA synthetase family. In terms of assembly, tetramer of two alpha and two beta subunits.

It is found in the cytoplasm. The enzyme catalyses tRNA(Gly) + glycine + ATP = glycyl-tRNA(Gly) + AMP + diphosphate. This chain is Glycine--tRNA ligase beta subunit, found in Anaeromyxobacter dehalogenans (strain 2CP-C).